A 220-amino-acid polypeptide reads, in one-letter code: Probable nicotinate-nucleotide adenylyltransferase (220 aa).

Belongs to the NadD family.

It catalyses the reaction nicotinate beta-D-ribonucleotide + ATP + H(+) = deamido-NAD(+) + diphosphate. The protein operates within cofactor biosynthesis; NAD(+) biosynthesis; deamido-NAD(+) from nicotinate D-ribonucleotide: step 1/1. Its function is as follows. Catalyzes the reversible adenylation of nicotinate mononucleotide (NaMN) to nicotinic acid adenine dinucleotide (NaAD). This chain is Probable nicotinate-nucleotide adenylyltransferase, found in Laribacter hongkongensis (strain HLHK9).